A 516-amino-acid chain; its full sequence is Replication factor C large subunit (516 aa).

44–51 (GAPGVGKT) provides a ligand contact to ATP. Positions 421-516 (RSEAVEAHAG…DGQAGLSEFM (96 aa)) are disordered. Positions 454–467 (VQSHKSAESGDDTV) are enriched in basic and acidic residues. The segment covering 479-496 (QSGASETASATESASDSD) has biased composition (low complexity). Over residues 497 to 508 (ASTDTDADDDDG) the composition is skewed to acidic residues.

This sequence belongs to the activator 1 small subunits family. RfcL subfamily. As to quaternary structure, heteromultimer composed of small subunits (RfcS) and large subunits (RfcL).

Its function is as follows. Part of the RFC clamp loader complex which loads the PCNA sliding clamp onto DNA. The sequence is that of Replication factor C large subunit from Haloquadratum walsbyi (strain DSM 16790 / HBSQ001).